Consider the following 454-residue polypeptide: Immediate-early protein ICP-46 homolog (454 aa).

Residues Glu-330 to Arg-357 are a coiled coil. Residues Ser-428–Met-454 form a disordered region.

This sequence belongs to the IIV-6 393L family.

In Invertebrate iridescent virus 6 (IIV-6), this protein is Immediate-early protein ICP-46 homolog.